The primary structure comprises 164 residues: Diphosphoinositol polyphosphate phosphohydrolase 3-beta (164 aa).

Substrate-binding positions include R9, 17–19 (KKR), and 38–40 (SSR). One can recognise a Nudix hydrolase domain in the interval 17-144 (KKRAACLCFR…VHAEYLEKLK (128 aa)). Residues G49 and E65 each coordinate Mg(2+). Positions 50-71 (GGMEPEEEPGGAAVREVYEEAG) match the Nudix box motif. E68 functions as the Proton acceptor in the catalytic mechanism. E69 provides a ligand contact to Mg(2+). Substrate contacts are provided by residues 89-91 (RKH), R115, and K133. The tract at residues 144 to 164 (KLGGSPTNGNSMAPSSPDSDP) is disordered. Polar residues predominate over residues 148-164 (SPTNGNSMAPSSPDSDP).

The protein belongs to the Nudix hydrolase family. DIPP subfamily. Requires Mg(2+) as cofactor. Mn(2+) serves as cofactor. Mainly expressed in testis and, at lower level in brain. According to PubMed:12121577, it is also expressed in pancreas and weakly expressed in thymus, prostate, ovary, lung, small intestine and heart.

The protein resides in the cytoplasm. It catalyses the reaction diphospho-myo-inositol polyphosphate + H2O = myo-inositol polyphosphate + phosphate.. The catalysed reaction is P(1),P(6)-bis(5'-adenosyl) hexaphosphate + H2O = adenosine 5'-pentaphosphate + AMP + 2 H(+). The enzyme catalyses P(1),P(5)-bis(5'-adenosyl) pentaphosphate + H2O = adenosine 5'-tetraphosphate + AMP + 2 H(+). Its function is as follows. Cleaves a beta-phosphate from the diphosphate groups in PP-InsP5 (diphosphoinositol pentakisphosphate), suggesting that it may play a role in signal transduction. Also able to catalyze the hydrolysis of dinucleoside oligophosphates, with Ap6A and Ap5A being the preferred substrates. The major reaction products are ADP and p4a from Ap6A and ADP and ATP from Ap5A. Also able to hydrolyze 5-phosphoribose 1-diphosphate. The protein is Diphosphoinositol polyphosphate phosphohydrolase 3-beta of Homo sapiens (Human).